Here is a 271-residue protein sequence, read N- to C-terminus: Tryptophan synthase alpha chain (271 aa).

Residues glutamate 59 and aspartate 70 each act as proton acceptor in the active site.

The protein belongs to the TrpA family. Tetramer of two alpha and two beta chains.

The catalysed reaction is (1S,2R)-1-C-(indol-3-yl)glycerol 3-phosphate + L-serine = D-glyceraldehyde 3-phosphate + L-tryptophan + H2O. Its pathway is amino-acid biosynthesis; L-tryptophan biosynthesis; L-tryptophan from chorismate: step 5/5. Its function is as follows. The alpha subunit is responsible for the aldol cleavage of indoleglycerol phosphate to indole and glyceraldehyde 3-phosphate. This Methanosarcina mazei (strain ATCC BAA-159 / DSM 3647 / Goe1 / Go1 / JCM 11833 / OCM 88) (Methanosarcina frisia) protein is Tryptophan synthase alpha chain.